An 873-amino-acid polypeptide reads, in one-letter code: Bifunctional levopimaradiene synthase, chloroplastic (873 aa).

Residues 1-59 (MAGVLFANLPCSLQLSPKVPFRQSTNILIPFHKRSSFGFNAQHCVRSHLRLRWNCVGIH) constitute a chloroplast transit peptide. K271 provides a ligand contact to substrate. Positions 405 and 407 each coordinate Mg(2+). The short motif at 405 to 408 (DVDD) is the DXDD motif element. K492 provides a ligand contact to substrate. Mg(2+)-binding residues include D624, D628, N769, T773, and E777. The DDXXD motif motif lies at 624 to 628 (DDLYD).

Belongs to the terpene synthase family. Tpsd subfamily. Mg(2+) is required as a cofactor. Expressed in roots.

Its subcellular location is the plastid. The protein localises to the chloroplast. It carries out the reaction (2E,6E,10E)-geranylgeranyl diphosphate = (+)-copalyl diphosphate. The enzyme catalyses (+)-copalyl diphosphate = abieta-8(14),12-diene + diphosphate. It participates in terpene metabolism; ginkgolide biosynthesis. Functionally, catalyzes the initial cyclization step in the biosynthesis of ginkgolides, a structurally unique family of diterpenoids that are highly specific platelet-activating-factor receptor antagonists. Bifunctional enzyme that catalyzes two sequential cyclizations of geranylgeranyl diphosphate (GGPP) to levopimaradiene. This is Bifunctional levopimaradiene synthase, chloroplastic (LPS) from Ginkgo biloba (Ginkgo).